Reading from the N-terminus, the 114-residue chain is MSASDKTKLCNKGMSRTSRTTTFVITPAFRERDDEGANSLCKAFLNTFSNLKSGMFKCLLGVGAVGTFISTFPQFFLLPCLLCVRCVCVCLCASISYAASAIFSFSIFFFFCLA.

2 helical membrane-spanning segments follow: residues 58–78 and 94–114; these read CLLG…FFLL and SISY…FCLA.

It is found in the membrane. This is an uncharacterized protein from Saccharomyces cerevisiae (strain ATCC 204508 / S288c) (Baker's yeast).